The sequence spans 315 residues: Putative HTH-type transcriptional regulatory protein PF1851 (315 aa).

An HTH cro/C1-type domain is found at 131-189 (LRELREKYGYSTTELAEMLGVSRKSVQRYEKGEGMVSIDVAIRLEEIFDEPLVKPIDIF). The segment at residues 142–161 (TTELAEMLGVSRKSVQRYEK) is a DNA-binding region (H-T-H motif).

The protein is Putative HTH-type transcriptional regulatory protein PF1851 of Pyrococcus furiosus (strain ATCC 43587 / DSM 3638 / JCM 8422 / Vc1).